A 209-amino-acid chain; its full sequence is Probable nicotinate-nucleotide adenylyltransferase (209 aa).

It belongs to the NadD family.

It catalyses the reaction nicotinate beta-D-ribonucleotide + ATP + H(+) = deamido-NAD(+) + diphosphate. It participates in cofactor biosynthesis; NAD(+) biosynthesis; deamido-NAD(+) from nicotinate D-ribonucleotide: step 1/1. Functionally, catalyzes the reversible adenylation of nicotinate mononucleotide (NaMN) to nicotinic acid adenine dinucleotide (NaAD). This is Probable nicotinate-nucleotide adenylyltransferase from Hydrogenovibrio crunogenus (strain DSM 25203 / XCL-2) (Thiomicrospira crunogena).